A 169-amino-acid polypeptide reads, in one-letter code: Ribosome maturation factor RimM (169 aa).

One can recognise a PRC barrel domain in the interval 97 to 169 (NDEAYFTDLI…KIVVDWEYDY (73 aa)).

Belongs to the RimM family. As to quaternary structure, binds ribosomal protein uS19.

It is found in the cytoplasm. Its function is as follows. An accessory protein needed during the final step in the assembly of 30S ribosomal subunit, possibly for assembly of the head region. Essential for efficient processing of 16S rRNA. May be needed both before and after RbfA during the maturation of 16S rRNA. It has affinity for free ribosomal 30S subunits but not for 70S ribosomes. This Francisella philomiragia subsp. philomiragia (strain ATCC 25017 / CCUG 19701 / FSC 153 / O#319-036) protein is Ribosome maturation factor RimM.